A 255-amino-acid chain; its full sequence is Imidazole glycerol phosphate synthase subunit HisF (255 aa).

Residues D12 and D131 contribute to the active site.

This sequence belongs to the HisA/HisF family. Heterodimer of HisH and HisF.

The protein localises to the cytoplasm. It carries out the reaction 5-[(5-phospho-1-deoxy-D-ribulos-1-ylimino)methylamino]-1-(5-phospho-beta-D-ribosyl)imidazole-4-carboxamide + L-glutamine = D-erythro-1-(imidazol-4-yl)glycerol 3-phosphate + 5-amino-1-(5-phospho-beta-D-ribosyl)imidazole-4-carboxamide + L-glutamate + H(+). Its pathway is amino-acid biosynthesis; L-histidine biosynthesis; L-histidine from 5-phospho-alpha-D-ribose 1-diphosphate: step 5/9. IGPS catalyzes the conversion of PRFAR and glutamine to IGP, AICAR and glutamate. The HisF subunit catalyzes the cyclization activity that produces IGP and AICAR from PRFAR using the ammonia provided by the HisH subunit. The protein is Imidazole glycerol phosphate synthase subunit HisF of Ignicoccus hospitalis (strain KIN4/I / DSM 18386 / JCM 14125).